The sequence spans 320 residues: Pyrroline-5-carboxylate reductase 2 (320 aa).

At Ser2 the chain carries N-acetylserine. Residues 6-11 (IGAGQL) and Ser34 each bind NADP(+). The NADPH site is built by Ala8, Gln10, Leu11, Ser34, Glu36, Asn56, Val70, Lys71, and Ala97. NADP(+)-binding positions include Asn56, 69-72 (AVKP), and 95-97 (CAA). Glu164 is an L-proline binding site. Asn230 is a binding site for NADPH. L-proline is bound by residues Ala237 and Thr238. Low complexity predominate over residues 295 to 305 (PTVSTLTPSSP). Positions 295-320 (PTVSTLTPSSPGKLLTRSLALGGKKD) are disordered. Ser304 is subject to Phosphoserine.

Belongs to the pyrroline-5-carboxylate reductase family. Homodecamer; composed of 5 homodimers. Interacts with LTO1. Detected in erythrocytes (at protein level). Expressed in fetal brain.

The protein localises to the cytoplasm. It is found in the mitochondrion. It catalyses the reaction L-proline + NADP(+) = (S)-1-pyrroline-5-carboxylate + NADPH + 2 H(+). The enzyme catalyses L-proline + NAD(+) = (S)-1-pyrroline-5-carboxylate + NADH + 2 H(+). It participates in amino-acid biosynthesis; L-proline biosynthesis; L-proline from L-glutamate 5-semialdehyde: step 1/1. Its activity is regulated as follows. Subject to competitive inhibition by NADP. Was reported not to be inhibited by proline. However other study demonstrated an inhibition by proline. Its function is as follows. Oxidoreductase that catalyzes the last step in proline biosynthesis, which corresponds to the reduction of pyrroline-5-carboxylate to L-proline using NAD(P)H. At physiologic concentrations, has higher specific activity in the presence of NADH. Involved in cellular response to oxidative stress. In some cell types, such as erythrocytes, its primary function may be the generation of NADP(+). In Homo sapiens (Human), this protein is Pyrroline-5-carboxylate reductase 2.